Reading from the N-terminus, the 571-residue chain is Glutamine--tRNA ligase (571 aa).

Positions 35 to 45 (PEPNGYLHIGH) match the 'HIGH' region motif. Residues 36-38 (EPN) and 42-48 (HIGHAKS) contribute to the ATP site. 2 residues coordinate L-glutamine: D68 and Y213. Residues T232, 262-263 (RL), and 270-272 (LSK) each bind ATP. Residues 269–273 (ILSKR) carry the 'KMSKS' region motif.

The protein belongs to the class-I aminoacyl-tRNA synthetase family. Monomer.

The protein localises to the cytoplasm. The catalysed reaction is tRNA(Gln) + L-glutamine + ATP = L-glutaminyl-tRNA(Gln) + AMP + diphosphate. This Buchnera aphidicola subsp. Acyrthosiphon pisum (strain Tuc7) protein is Glutamine--tRNA ligase.